A 66-amino-acid chain; its full sequence is MAKSKDARIRVLLECTSCVRGGVNKESTGISRYITEKNRHNTPGRLELQKFCPYCYKHTIHGEIKK.

Belongs to the bacterial ribosomal protein bL33 family.

The protein resides in the plastid. It is found in the chloroplast. This chain is Large ribosomal subunit protein bL33c, found in Vitis vinifera (Grape).